Consider the following 1319-residue polypeptide: MGIRNFEKIRIKLASPEKILEWSHGEVTKPETINYRTLNPERDGLFCEIIFGPTKDWECSCGKYKRMRYKGLVCEKCGVEVTRAKVRRERMGHITLASPVSHIWYSKGSPNKMSLIIGISSKELESVLYFARYIVTSSQESTVEVGKILTEKEYKLLKQLYGNKFEAYMGADGILKLLTAIDLEKLRDELENELAEANSAQKRKKLVKRLKIVRDFIASGNRPEWMILTNVPVIPAELRPMVQLDGGRFATSDLNDLYRRVINRNNRLKKLLEIRAPEIVVKNEKRMLQEAVDALIDNGRRGKPVVAQNNRELKSLSDMLKGKQGRFRQNLLGKRVDYSARSVIVVGPSLKMNQCGIPKKMALELYKPFIMRELVRRELANNIKMAKKLVEESDDKVWAVIEDVIADHPVLLNRAPTLHRLSIQAFQPVLIEGKAIRLHPLVCSAFNADFDGDQMAVHLTLSPESMMEAKLLMFAPNNIISPSSGEPIAVPSQDMVMGCFYMTKERPGEKGEGKLFSNIEQVITAYQNDKVGTHALIKVRMNGELIETTPGRVLFNEILPEIDRNYHKTYGKKEIKSLIKSLYEAHGFTETAELINRVKNFGYHYGTFAGVSVGIEDLEVPPKKKSLLNQADKEVAQIDKDYKSGKIINEERYRKTIEVWSRTTEAVTDAMMKNLDEFNPVYMMATSGARGNVSQMRQLAGMRGNMADTQGRTIEVPIKANFREGLTVLEFFMSSHGARKGLADTALRTADSGYLTRRLVDISHEVIVNEEDCHTHEGIEVEALVGANGKIIEKLSERINGRVLAEDLVHKGKKIAKRNTMIHKDLLDKIEELGIKKVKIRSPLTCALEKGVCQKCYGMDLSNYNEILLGEAVGVVAAQSIGEPGTQLTMRTFHTGGVAGAATVVNSKKAENDGEVSFRDIKTIEINGEDVVVSQGGKIIIADNEHEVDSGSVIRVTEGQKVKEGDVLVTFDPYHIPIISSHDGKVQYRHFTPKNIRDEKYDVHEYLVVRSVDSVDSEPRVHILDKKNEKLATYNIPYGAYMMVRDGAKVKKGDIIAKIIKLGEGTKDITGGLPRVQELFEARNPKGKATLAEIDGRIEILTTKKKQMRVVNVRSLENPEEFKEYLIPMGERLVVTDGLKIKAGDKITEGAISPYDVLNIKGLVAAEQFILESVQQVYRDQGVTVNDKHIEIIVKQMFRKVRIIDSGASLFLEDEVIEKRVVDLENKKLEEQGKALIKYEPVIQGITKAAVNTGSFISAASFQETTKVLSNAAIEGKVDYLEGLKENVILGKKIPAGTGFNKYKSIKVRYNTDDKPEEE.

Zn(2+) is bound by residues C59, C61, C74, and C77. Residues D449, D451, and D453 each coordinate Mg(2+). Zn(2+) is bound by residues C773, C846, C853, and C856.

It belongs to the RNA polymerase beta' chain family. In terms of assembly, the RNAP catalytic core consists of 2 alpha, 1 beta, 1 beta' and 1 omega subunit. When a sigma factor is associated with the core the holoenzyme is formed, which can initiate transcription. Mg(2+) serves as cofactor. It depends on Zn(2+) as a cofactor.

It carries out the reaction RNA(n) + a ribonucleoside 5'-triphosphate = RNA(n+1) + diphosphate. DNA-dependent RNA polymerase catalyzes the transcription of DNA into RNA using the four ribonucleoside triphosphates as substrates. The protein is DNA-directed RNA polymerase subunit beta' of Fusobacterium nucleatum subsp. nucleatum (strain ATCC 25586 / DSM 15643 / BCRC 10681 / CIP 101130 / JCM 8532 / KCTC 2640 / LMG 13131 / VPI 4355).